The chain runs to 181 residues: 6,7-dimethyl-8-ribityllumazine synthase (181 aa).

5-amino-6-(D-ribitylamino)uracil contacts are provided by residues Tyr27, Ala58 to Glu60, and Cys87 to Ile89. Glu92–Thr93 contacts (2S)-2-hydroxy-3-oxobutyl phosphate. His95 serves as the catalytic Proton donor. Asn120 contacts 5-amino-6-(D-ribitylamino)uracil. Arg134 provides a ligand contact to (2S)-2-hydroxy-3-oxobutyl phosphate.

It belongs to the DMRL synthase family.

It catalyses the reaction (2S)-2-hydroxy-3-oxobutyl phosphate + 5-amino-6-(D-ribitylamino)uracil = 6,7-dimethyl-8-(1-D-ribityl)lumazine + phosphate + 2 H2O + H(+). The protein operates within cofactor biosynthesis; riboflavin biosynthesis; riboflavin from 2-hydroxy-3-oxobutyl phosphate and 5-amino-6-(D-ribitylamino)uracil: step 1/2. Functionally, catalyzes the formation of 6,7-dimethyl-8-ribityllumazine by condensation of 5-amino-6-(D-ribitylamino)uracil with 3,4-dihydroxy-2-butanone 4-phosphate. This is the penultimate step in the biosynthesis of riboflavin. The polypeptide is 6,7-dimethyl-8-ribityllumazine synthase (Methylobacterium nodulans (strain LMG 21967 / CNCM I-2342 / ORS 2060)).